We begin with the raw amino-acid sequence, 186 residues long: dCTP deaminase (186 aa).

Residue 107-112 coordinates dCTP; sequence KSTYAR. The active-site Proton donor/acceptor is Glu-133. Positions 152, 166, and 176 each coordinate dCTP.

This sequence belongs to the dCTP deaminase family. As to quaternary structure, homotrimer.

The catalysed reaction is dCTP + H2O + H(+) = dUTP + NH4(+). Its pathway is pyrimidine metabolism; dUMP biosynthesis; dUMP from dCTP (dUTP route): step 1/2. In terms of biological role, catalyzes the deamination of dCTP to dUTP. This chain is dCTP deaminase, found in Campylobacter jejuni (strain RM1221).